Reading from the N-terminus, the 367-residue chain is MDYRDAGVDIQAGRDFVNRIKALVQQTTRSEVLGGLGGFGGCFQLPEGYRQPVLVSGADGVGTKLKIAQALNQHHTIGIDLVAMCVNDVLTCGAEPLFFLDYLATGHLEPEALTDVIAGIAQGCQQAGCALLGGETAEMPGFYPVGEYDLAGFCVGIVEKAEMLNGSQVRMGDRAIGLASSGVHSNGYSLVRKIVDEFIGPAAREQSEAGATEALVSPWSITPWAEREDLPPVDRQQSLGAALLTPTQIYVKPVLAAQRSGLTLHGMAHITGGGLPENLPRCLGEGQSVQLDPQSWPAPPIFDWIASTGSVPTAAMFDTFNMGIGFVLIVPPDEVESALRWFNTQQCPAYGIGEVVAGAGEVLGLPG.

The protein belongs to the AIR synthase family.

The protein resides in the cytoplasm. The enzyme catalyses 2-formamido-N(1)-(5-O-phospho-beta-D-ribosyl)acetamidine + ATP = 5-amino-1-(5-phospho-beta-D-ribosyl)imidazole + ADP + phosphate + H(+). The protein operates within purine metabolism; IMP biosynthesis via de novo pathway; 5-amino-1-(5-phospho-D-ribosyl)imidazole from N(2)-formyl-N(1)-(5-phospho-D-ribosyl)glycinamide: step 2/2. This chain is Phosphoribosylformylglycinamidine cyclo-ligase, found in Cyanothece sp. (strain PCC 7425 / ATCC 29141).